A 537-amino-acid polypeptide reads, in one-letter code: MSLEDESFPADELFEQLNSASIGASRQFKSQFGEHDQPEAFERNPAPFLTSDCSDESSFIDAANKSAKTCVSDPVGLDQCEEEEEVDKDFEDSALANGNSELQIKSARSSKSVSYQDIHSAHTKRRYKHVTSKVAKYIADIHAQDQQRRNATKKFQRHSSMPEYLTPTARERGAHFSVDELHNLDESLDNSSAGNITDAKTPNDSYERLLSENERLQNDKEDLKSYSDYLQTKLDEKAMENMQLRRNFDVLRTDLTDCKEKLKRNQSYSLRSLNFCPPASVPKATQTDHELLSHAPNISRLSNMVAIADSGTPLPGSNTNNLTYDSSAGSIEVALLSVAPAARQPNAGKPKKNIQPHSLDFSNDSTEAEPNGNGTTSTGHSSSRAITSRRGAAPNNSESSHPSSNDSAIEVEALDLRSPYHRQPQGSIYPPMQDWGHSDGIYFFDKRNSRVIEVRSINVSQSSNPEQNSGTSETNLLNQSHVQFRHKRTSMGTRMLRLLGPCVRCTDTNQSVNASSATYTIGLPLLREEYGGRHTDR.

The disordered stretch occupies residues Gln344–Asp406. Low complexity-rich tracts occupy residues Asn371–Ser383 and Ala392–Asp406.

May be constituted of a homo- or heterodimer.

It is found in the nucleus. Has a role in localizing bicoid mRNA at the anterior margin of the oocyte during oogenesis, and a poorly characterized role in nuclear divisions in early embryogenesis. This chain is Protein swallow (swa), found in Drosophila pseudoobscura pseudoobscura (Fruit fly).